Reading from the N-terminus, the 969-residue chain is RNA polymerase-associated protein RapA (969 aa).

The Helicase ATP-binding domain maps to glutamate 164 to aspartate 334. Aspartate 177–threonine 184 provides a ligand contact to ATP. A DEAH box motif is present at residues aspartate 280 to histidine 283. The 177-residue stretch at arginine 492 to isoleucine 668 folds into the Helicase C-terminal domain.

It belongs to the SNF2/RAD54 helicase family. RapA subfamily. Interacts with the RNAP. Has a higher affinity for the core RNAP than for the holoenzyme. Its ATPase activity is stimulated by binding to RNAP.

Its function is as follows. Transcription regulator that activates transcription by stimulating RNA polymerase (RNAP) recycling in case of stress conditions such as supercoiled DNA or high salt concentrations. Probably acts by releasing the RNAP, when it is trapped or immobilized on tightly supercoiled DNA. Does not activate transcription on linear DNA. Probably not involved in DNA repair. This Vibrio vulnificus (strain CMCP6) protein is RNA polymerase-associated protein RapA.